Here is a 157-residue protein sequence, read N- to C-terminus: Catabolic 3-dehydroquinase (157 aa).

The active-site Proton acceptor is the Tyr27. The substrate site is built by Asn80, His86, and Asp93. Catalysis depends on His106, which acts as the Proton donor. Residues 107 to 108 (VS) and Arg117 contribute to the substrate site.

Belongs to the type-II 3-dehydroquinase family. In terms of assembly, homododecamer. Adopts a ring-like structure, composed of an arrangement of two hexameric rings stacked on top of one another.

The enzyme catalyses 3-dehydroquinate = 3-dehydroshikimate + H2O. Its pathway is aromatic compound metabolism; 3,4-dihydroxybenzoate biosynthesis; 3,4-dihydroxybenzoate from 3-dehydroquinate: step 1/2. Is involved in the catabolism of quinate. Allows the utilization of quinate as carbon source via the beta-ketoadipate pathway. This Pyricularia oryzae (strain 70-15 / ATCC MYA-4617 / FGSC 8958) (Rice blast fungus) protein is Catabolic 3-dehydroquinase.